A 126-amino-acid polypeptide reads, in one-letter code: Aspartate 1-decarboxylase (126 aa).

Ser25 functions as the Schiff-base intermediate with substrate; via pyruvic acid in the catalytic mechanism. Position 25 is a pyruvic acid (Ser) (Ser25). Substrate is bound at residue Thr57. Tyr58 functions as the Proton donor in the catalytic mechanism. 73 to 75 lines the substrate pocket; the sequence is GAA.

The protein belongs to the PanD family. Heterooctamer of four alpha and four beta subunits. Requires pyruvate as cofactor. In terms of processing, is synthesized initially as an inactive proenzyme, which is activated by self-cleavage at a specific serine bond to produce a beta-subunit with a hydroxyl group at its C-terminus and an alpha-subunit with a pyruvoyl group at its N-terminus.

It localises to the cytoplasm. It carries out the reaction L-aspartate + H(+) = beta-alanine + CO2. It participates in cofactor biosynthesis; (R)-pantothenate biosynthesis; beta-alanine from L-aspartate: step 1/1. Functionally, catalyzes the pyruvoyl-dependent decarboxylation of aspartate to produce beta-alanine. In Cellvibrio japonicus (strain Ueda107) (Pseudomonas fluorescens subsp. cellulosa), this protein is Aspartate 1-decarboxylase.